The primary structure comprises 1083 residues: Alpha-mannosidase (1083 aa).

Residue Ser-2 is modified to N-acetylserine. 4 residues coordinate Zn(2+): His-298, Asp-300, Asp-411, and His-626. Catalysis depends on Asp-411, which acts as the Nucleophile.

This sequence belongs to the glycosyl hydrolase 38 family. Composed of isoforms with three constituent polypeptides described as [(107 kDa)-n (73 kDa)-(6-n) (31 kDa)-(6-n)], where n is 0-6. The 73 kDa and the 31 kDa polypeptides may be proteolytic derivatives of the 107 kDa polypeptide in the vacuole. Oligomerizes in the cytoplasm and retains its oligomeric form during import into the vacuole. The cofactor is Zn(2+). Post-translationally, the N-terminus is blocked.

Its subcellular location is the vacuole. It carries out the reaction Hydrolysis of terminal, non-reducing alpha-D-mannose residues in alpha-D-mannosides.. In terms of biological role, degrades free oligosaccharides in the vacuole. This chain is Alpha-mannosidase (AMS1), found in Saccharomyces cerevisiae (strain ATCC 204508 / S288c) (Baker's yeast).